The sequence spans 278 residues: Tumor necrosis factor ligand superfamily member 6 (278 aa).

Topologically, residues 1-77 (MQQPVNYPCP…SPLKKKDNIE (77 aa)) are cytoplasmic. A disordered region spans residues 26–68 (PGSVFSCPSSGPRGPGQRRPPPPPPPPSPLPPPSQPPPLPPLS). A compositionally biased stretch (low complexity) spans 33–42 (PSSGPRGPGQ). Positions 43–68 (RRPPPPPPPPSPLPPPSQPPPLPPLS) are enriched in pro residues. The chain crosses the membrane as a helical; Signal-anchor for type II membrane protein span at residues 78–99 (LWLPVIFFMVLVALVGMGLGMY). At 100–278 (QLFHLQKELA…SKTFFGLYKL (179 aa)) the chain is on the extracellular side. Asn-116 carries an N-linked (GlcNAc...) asparagine glycan. Residues 125-135 (EKQIANPSTPS) are compositionally biased toward polar residues. A disordered region spans residues 125–147 (EKQIANPSTPSETKKPRSVAHLT). The THD domain occupies 142 to 278 (SVAHLTGNPR…SKTFFGLYKL (137 aa)). Cys-199 and Cys-230 are joined by a disulfide. 2 N-linked (GlcNAc...) asparagine glycosylation sites follow: Asn-247 and Asn-257.

This sequence belongs to the tumor necrosis factor family. Homotrimer. Interacts with ARHGAP9, BAIAP2L1, BTK, CACNB3, CACNB4, CRK, DLG2, DNMBP, DOCK4, EPS8L3, FGR, FYB1, FYN, HCK, ITK, ITSN2, KALRN, LYN, MACC1, MIA, MPP4, MYO15A, NCF1, NCK1, NCK2, NCKIPSD, OSTF1, PIK3R1, PSTPIP1, RIMBP3C, SAMSN1, SH3GL3, SH3PXD2B, SH3PXD2A, SH3RF2, SKAP2, SNX33, SNX9, SORBS3, SPTA1, SRC, SRGAP1, SRGAP2, SRGAP3, TEC, TJP3 and YES1. Post-translationally, the soluble form derives from the membrane form by proteolytic processing. The membrane-bound form undergoes two successive intramembrane proteolytic cleavages. The first one is processed by ADAM10 producing an N-terminal fragment, which lacks the receptor-binding extracellular domain. This ADAM10-processed FasL (FasL APL) remnant form is still membrane anchored and further processed by SPPL2A that liberates the FasL intracellular domain (FasL ICD). FasL shedding by ADAM10 is a prerequisite for subsequent intramembrane cleavage by SPPL2A in T-cells. In terms of processing, phosphorylated by FGR on tyrosine residues; this is required for ubiquitination and subsequent internalization. N-glycosylated. Post-translationally, monoubiquitinated. Expressed in activated splenocytes and thymocytes. Moderate or weak expression found in small intestines, kidney and lung.

The protein resides in the cell membrane. The protein localises to the cytoplasmic vesicle lumen. It is found in the lysosome lumen. Its subcellular location is the secreted. It localises to the nucleus. Its function is as follows. Cytokine that binds to TNFRSF6/FAS, a receptor that transduces the apoptotic signal into cells. Involved in cytotoxic T-cell-mediated apoptosis, natural killer cell-mediated apoptosis and in T-cell development. Initiates fratricidal/suicidal activation-induced cell death (AICD) in antigen-activated T-cells contributing to the termination of immune responses. TNFRSF6/FAS-mediated apoptosis also has a role in the induction of peripheral tolerance. Binds to TNFRSF6B/DcR3, a decoy receptor that blocks apoptosis. In terms of biological role, induces FAS-mediated activation of NF-kappa-B, initiating non-apoptotic signaling pathways. Can induce apoptosis but does not appear to be essential for this process. Functionally, cytoplasmic form induces gene transcription inhibition. This chain is Tumor necrosis factor ligand superfamily member 6 (Faslg), found in Rattus norvegicus (Rat).